Reading from the N-terminus, the 285-residue chain is Hydrolase in pqqF 5'region (285 aa).

Residues 22–258 (MRVALYQCPP…EALIIGTLDR (237 aa)) form the CN hydrolase domain. The active-site Proton acceptor is the Glu60. Catalysis depends on Lys131, which acts as the Proton donor. Cys165 functions as the Nucleophile in the catalytic mechanism.

The protein belongs to the carbon-nitrogen hydrolase superfamily. NIT1/NIT2 family.

This chain is Hydrolase in pqqF 5'region, found in Pseudomonas protegens (strain DSM 19095 / LMG 27888 / CFBP 6595 / CHA0).